Consider the following 643-residue polypeptide: Mitochondrial Rho GTPase 2 (643 aa).

The Cytoplasmic portion of the chain corresponds to 1–611 (MMLGGKSSAG…SGRRSRNIRQ (611 aa)). Residues 12-179 (RTSLRVAVAG…FYFASKAVLH (168 aa)) enclose the Miro 1 domain. EF-hand domains follow at residues 195–230 (RLRRAVQRIFNLCDHDLDGALNDAELNDFQVNCFGA) and 315–350 (EAMDFLSGIFQLYDLDNDGALQPAELDDLFQTAPDS). 8 residues coordinate Ca(2+): Asp-208, Asp-210, Asp-212, Glu-219, Asp-328, Asp-330, Asp-332, and Glu-339. The region spanning 423–592 (RNVFQCFVFG…FSRIVSTAEN (170 aa)) is the Miro 2 domain. A helical transmembrane segment spans residues 612–632 (LVNSSLLFVSVGTAVGFAGLA). The Mitochondrial intermembrane segment spans residues 633–643 (AYRAYSARKNA).

This sequence belongs to the mitochondrial Rho GTPase family. As to expression, expressed roots, rosette and cauline leaves, stems, flowers and siliques.

It localises to the mitochondrion outer membrane. Its activity is regulated as follows. Activated by calcium. Calcium-binding mitochondrial GTPase involved in calcium signaling during salt stress response. May play a role in the progression of embryonic cell division, development of haploid male and female gametes, and pollen tube growth. The polypeptide is Mitochondrial Rho GTPase 2 (Arabidopsis thaliana (Mouse-ear cress)).